Reading from the N-terminus, the 231-residue chain is MASAVFEGTSLVNMFVRGCWVNGIRRLVVSRRGDEEEFFEIRTEWSDRSVLYLHRSLADLGRLWQRLRDAFPEDRPELVRAPLRQGLIAIKDAHDIETRLNEVEKLLKAIISMPRKYSRSEVVLTFFERSPLDQVLKNDNVHKIQCGFQSPVKISEIMRSNGFCLANTETIVIDHSIPNGKDQHGAVDPAEHLFEGGGELPAELEDGDDPAAYVTNLSYYHLVPFETDILD.

The 134-residue stretch at 1-134 (MASAVFEGTS…TFFERSPLDQ (134 aa)) folds into the PX domain.

The chain is PX domain-containing protein 1 (PXDC1) from Bos taurus (Bovine).